The primary structure comprises 684 residues: Methionine--tRNA ligase (684 aa).

Positions 17–27 (PYANGKAHVGH) match the 'HIGH' region motif. Residues Cys-148, Cys-151, Cys-160, and Cys-164 each contribute to the Zn(2+) site. Positions 330–334 (TFSKS) match the 'KMSKS' region motif. ATP is bound at residue Lys-333. Residues 582 to 684 (DFSKLDIRIG…KETNPGTCIH (103 aa)) enclose the tRNA-binding domain.

It belongs to the class-I aminoacyl-tRNA synthetase family. MetG type 1 subfamily. In terms of assembly, homodimer. Zn(2+) is required as a cofactor.

Its subcellular location is the cytoplasm. The catalysed reaction is tRNA(Met) + L-methionine + ATP = L-methionyl-tRNA(Met) + AMP + diphosphate. Functionally, is required not only for elongation of protein synthesis but also for the initiation of all mRNA translation through initiator tRNA(fMet) aminoacylation. The protein is Methionine--tRNA ligase of Methanococcoides burtonii (strain DSM 6242 / NBRC 107633 / OCM 468 / ACE-M).